The sequence spans 174 residues: Ribosome rescue factor SmrB (174 aa).

The region spanning 96–171 (LDLHGMNQQQ…GDSAILVLLD (76 aa)) is the Smr domain.

The protein belongs to the SmrB family. In terms of assembly, associates with collided ribosomes, but not with correctly translating polysomes.

In terms of biological role, acts as a ribosome collision sensor. Detects stalled/collided disomes (pairs of ribosomes where the leading ribosome is stalled and a second ribosome has collided with it) and endonucleolytically cleaves mRNA at the 5' boundary of the stalled ribosome. Stalled/collided disomes form a new interface (primarily via the 30S subunits) that binds SmrB. Cleaved mRNA becomes available for tmRNA ligation, leading to ribosomal subunit dissociation and rescue of stalled ribosomes. This chain is Ribosome rescue factor SmrB, found in Aeromonas hydrophila subsp. hydrophila (strain ATCC 7966 / DSM 30187 / BCRC 13018 / CCUG 14551 / JCM 1027 / KCTC 2358 / NCIMB 9240 / NCTC 8049).